A 167-amino-acid chain; its full sequence is U-scoloptoxin-Er5c (167 aa).

A signal peptide spans 1 to 22; it reads MKTNCEFPLLCLLIVLVANVEG. The propeptide occupies 23–94; sequence EVEDTGLKMV…KRLWRNWERR (72 aa). 3 RLWRNWE repeats span residues 34-40, 61-67, and 86-92; these read RLWRNWE. Q95 carries the post-translational modification Pyrrolidone carboxylic acid. One copy of the RLWRNWE 4; approximate repeat lies at 107-113; it reads ELWRNWE. A propeptide spanning residues 112-118 is cleaved from the precursor; sequence WEDLKRR. A Pyrrolidone carboxylic acid modification is found at Q119. The stretch at 134 to 140 is one RLWRNWE 5 repeat; the sequence is RLWRNWE. Residues 139–167 constitute a propeptide that is removed on maturation; the sequence is WEDNHATLRKRSADSLSRQKRLGRERGKE. The segment at 147-167 is disordered; that stretch reads RKRSADSLSRQKRLGRERGKE.

Belongs to the scoloptoxin-08 family. Expressed by the venom gland.

It is found in the secreted. The chain is U-scoloptoxin-Er5c from Ethmostigmus rubripes (Giant centipede).